Reading from the N-terminus, the 288-residue chain is Putative transcription factor kapC (288 aa).

Pro residues predominate over residues 1–10 (MQPTLAPAPH). The interval 1-121 (MQPTLAPAPH…AAQRAFRQRK (121 aa)) is disordered. The segment covering 26 to 41 (HDQLLAAHQHLSHPQQ) has biased composition (low complexity). Residues 42–54 (ARPPPPPPQPPHM) show a composition bias toward pro residues. The span at 84–93 (QPDLSGQESP) shows a compositional bias: polar residues. Positions 100–163 (PLSTSKRAAQ…EYIINLQSRL (64 aa)) constitute a bZIP domain. The basic motif stretch occupies residues 101-124 (LSTSKRAAQNRAAQRAFRQRKEAH). Positions 106-116 (RAAQNRAAQRA) are enriched in low complexity. Positions 128–159 (LEGKVKAYETMGEAIKALQAENYQLREYIINL) are leucine-zipper. Disordered regions lie at residues 172-226 (ELPG…NDDM) and 242-288 (PPTE…PLIS). Positions 202-212 (PVPPPTAPQQP) are enriched in pro residues. Over residues 213–222 (QPAQNQASAP) the composition is skewed to low complexity.

Belongs to the bZIP family.

It localises to the nucleus. In terms of biological role, putative transcription factor. The protein is Putative transcription factor kapC (kapC) of Aspergillus clavatus (strain ATCC 1007 / CBS 513.65 / DSM 816 / NCTC 3887 / NRRL 1 / QM 1276 / 107).